The sequence spans 1413 residues: DNA-directed RNA polymerase subunit beta' (1413 aa).

Zn(2+) is bound by residues Cys70, Cys72, Cys85, and Cys88. Residues Asp460, Asp462, and Asp464 each contribute to the Mg(2+) site. Residues Cys819, Cys893, Cys900, and Cys903 each coordinate Zn(2+).

The protein belongs to the RNA polymerase beta' chain family. In terms of assembly, the RNAP catalytic core consists of 2 alpha, 1 beta, 1 beta' and 1 omega subunit. When a sigma factor is associated with the core the holoenzyme is formed, which can initiate transcription. Requires Mg(2+) as cofactor. It depends on Zn(2+) as a cofactor.

It catalyses the reaction RNA(n) + a ribonucleoside 5'-triphosphate = RNA(n+1) + diphosphate. Functionally, DNA-dependent RNA polymerase catalyzes the transcription of DNA into RNA using the four ribonucleoside triphosphates as substrates. The polypeptide is DNA-directed RNA polymerase subunit beta' (Burkholderia vietnamiensis (strain G4 / LMG 22486) (Burkholderia cepacia (strain R1808))).